Reading from the N-terminus, the 139-residue chain is MLSPKKTRFRKQHRGRMKGKACRGNKICFGKYALQALEPAWITSRQIEAGRRAMSRNVRRGGQIWIRIFPDKPVTVRPTETRMGSGKGSPEYWVAVIKPGKILYEMGGVAENIARKAISLAASKMPIRTQFILLEESHN.

Belongs to the universal ribosomal protein uL16 family. As to quaternary structure, part of the 50S ribosomal subunit.

It localises to the plastid. The protein localises to the chloroplast. The sequence is that of Large ribosomal subunit protein uL16c from Cicer arietinum (Chickpea).